The sequence spans 992 residues: RNA-binding protein 12 (992 aa).

The RRM 1 domain maps to 304–379; that stretch reads LYVSVHGMPF…RYVEVSPATE (76 aa). A phosphoserine mark is found at Ser-352 and Ser-375. A disordered region spans residues 393 to 424; that stretch reads QSMGPSGQAHPPPQTLPRSKSPSGQKRSRSRS. The segment covering 408 to 417 has biased composition (polar residues); that stretch reads LPRSKSPSGQ. Phosphoserine occurs at positions 420, 422, and 424. The RRM 2 domain maps to 430–507; it reads FCVYLKGLPF…RFIQVHPITK (78 aa). At Ser-525 the chain carries Phosphoserine. Residues 849 to 913 are disordered; sequence FGGIPQNFGN…PGFGASSGKP (65 aa). The span at 876-887 shows a compositional bias: low complexity; the sequence is LGSVPGHLSGPP. Positions 916–992 constitute an RRM 3 domain; sequence TIIKVQNMPF…GSRKVKLVLG (77 aa).

The protein resides in the nucleus. In Mus musculus (Mouse), this protein is RNA-binding protein 12 (Rbm12).